The primary structure comprises 245 residues: Peroxisome biogenesis protein 19-2 (245 aa).

A disordered region spans residues 17-106; the sequence is ALDDFKDLNL…LSSKQQPTGS (90 aa). Basic and acidic residues-rich tracts occupy residues 33–44 and 71–92; these read VKKEEGDKKETE and AKED…ETVK. Residues 96 to 105 are compositionally biased toward polar residues; it reads SLSSKQQPTG. Position 242 is a cysteine methyl ester (Cys-242). Cys-242 carries S-farnesyl cysteine lipidation. Residues 243-245 constitute a propeptide, removed in mature form; sequence CVM.

This sequence belongs to the peroxin-19 family. In terms of assembly, dimer. Interacts with PEX10 (via C-terminus). In terms of processing, may be farnesylated. As to expression, expressed in roots, leaves, flowers, siliques and stems. Highest expression in roots and leaves.

Its subcellular location is the cytoplasm. It is found in the peroxisome membrane. Contributes to morphology determination of peroxisomes, but not to import of peroxisomal matrix proteins. Required for proper post-translational import and stabilization of peroxisomal membrane proteins (PMPs). Acts as a cytosolic import receptor for PMPs and delivers them to the docking factor PEX3 at the peroxisomal membrane for subsequent insertion into the membrane. Acts as a chaperone in stabilizing or maintaining PMPs in the lipid bilayer. In Arabidopsis thaliana (Mouse-ear cress), this protein is Peroxisome biogenesis protein 19-2 (PEX19-2).